We begin with the raw amino-acid sequence, 431 residues long: Forkhead box protein P3 (431 aa).

The disordered stretch occupies residues 1-68; it reads MPNPRPGKPS…SSLNPMPPSQ (68 aa). The segment covering 10-25 has biased composition (low complexity); sequence SAPSLALGPSPGASPS. Ser19 carries the phosphoserine; by CDK2 modification. Residue Lys31 is modified to N6-acetyllysine. The short motif at 68-76 is the Nuclear export signal element; that stretch reads QLQLPTLPL. The LXXLL motif signature appears at 92 to 96; the sequence is LQALL. Residues 106–190 are essential for transcriptional repressor activity and for interaction with KAT5 and HDAC7; that stretch reads LSTVDAHART…STLSAVPQSS (85 aa). Positions 106-198 are interaction with ZFP90; sequence LSTVDAHART…SSYPLLANGV (93 aa). The interaction with IKZF4 stretch occupies residues 149 to 199; that stretch reads LPPGINVASLEWVSREPALLCTFPNPSAPRKDSTLSAVPQSSYPLLANGVC. The C2H2-type zinc finger occupies 197–222; sequence GVCKWPGCEKVFEEPEDFLKHCQADH. A Nuclear export signal motif is present at residues 239–248; that stretch reads VQSLEQQLVL. Residues 239–260 are leucine-zipper; the sequence is VQSLEQQLVLEKEKLSAMQAHL. Residues Lys250 and Lys252 each participate in a glycyl lysine isopeptide (Lys-Gly) (interchain with G-Cter in ubiquitin) cross-link. 2 positions are modified to N6-acetyllysine; alternate: Lys263 and Lys268. Glycyl lysine isopeptide (Lys-Gly) (interchain with G-Cter in ubiquitin); alternate cross-links involve residues Lys263 and Lys268. Positions 278–336 are interaction with RUNX1; that stretch reads GSCCIVAAGSQGPVVPAWSGPREAPDSLFAVRRHLWGSHGNSTFPEFLHNMDYFKFHNM. Positions 337 to 423 form a DNA-binding region, fork-head; it reads RPPFTYATLI…RKKRSQRPSR (87 aa). Residue Lys393 forms a Glycyl lysine isopeptide (Lys-Gly) (interchain with G-Cter in ubiquitin) linkage. Positions 414–417 match the Nuclear localization signal motif; that stretch reads RKKR. At Ser418 the chain carries Phosphoserine. Positions 418–431 are excised as a propeptide; that stretch reads SQRPSRCSNPTPGP.

In terms of assembly, homodimer. Dimerization is essential for its transcriptional regulator activity. Interacts with IKZF3. Isoform 1 (via LXXLL motif), but not isoform 2, interacts with isoform 4 of RORA (via AF-2 motif). Interacts with STUB1, HSPA8 and HSPA1A/B. Interacts with PPP1CA, PPP1CB and PPP1CG. Interacts with KAT5 and HDAC7. Interacts with HDAC9 in the absence of T-cell stimulation. Interacts with USP7. Interacts with isoform 2 of ZFP90 and can form a complex with TRIM28 in the presence of isoform 2 of ZFP90. Interacts with RUNX1. Interacts with RORC. Interacts with RELA and NFATC2. Interacts with RUNX2, RUNX3 and IKZF4. Polyubiquitinated, leading to its proteasomal degradation in regulatory T-cells (Treg) which is mediated by STUB1 in a HSPA1A/B-dependent manner. Deubiquitinated by USP7 and USP44; leading to increase in protein stability. In terms of processing, phosphorylation at Ser-418 regulates its transcriptional repressor activity and consequently, regulatory T-cells (Treg) suppressive function. Dephosphorylated at Ser-418 by protein phosphatase 1 (PP1) in Treg cells derived from patients with rheumatoid arthritis. Phosphorylation by CDK2 negatively regulates its transcriptional activity and protein stability. Post-translationally, acetylation on lysine residues stabilizes FOXP3 and promotes differentiation of T-cells into induced regulatory T-cells (iTregs) associated with suppressive functions. Acetylation is mediated by a coordinated action of KAT5 and EP300/p300 acetyltransferases: EP300/p300 is required to enhance KAT5 autoacetylation, promoting acetylation of FOXP3 by KAT5. Deacetylated by SIRT1. Undergoes proteolytic cleavage in activated regulatory T-cells (Treg), and can be cleaved at either the N- or C-terminal site, or at both sites.

The protein resides in the nucleus. The protein localises to the cytoplasm. Functionally, transcriptional regulator which is crucial for the development and inhibitory function of regulatory T-cells (Treg). Plays an essential role in maintaining homeostasis of the immune system by allowing the acquisition of full suppressive function and stability of the Treg lineage, and by directly modulating the expansion and function of conventional T-cells. Can act either as a transcriptional repressor or a transcriptional activator depending on its interactions with other transcription factors, histone acetylases and deacetylases. The suppressive activity of Treg involves the coordinate activation of many genes, including CTLA4 and TNFRSF18 by FOXP3 along with repression of genes encoding cytokines such as interleukin-2 (IL2) and interferon-gamma (IFNG). Inhibits cytokine production and T-cell effector function by repressing the activity of two key transcription factors, RELA and NFATC2. Mediates transcriptional repression of IL2 via its association with histone acetylase KAT5 and histone deacetylase HDAC7. Can activate the expression of TNFRSF18, IL2RA and CTLA4 and repress the expression of IL2 and IFNG via its association with transcription factor RUNX1. Inhibits the differentiation of IL17 producing helper T-cells (Th17) by antagonizing RORC function, leading to down-regulation of IL17 expression, favoring Treg development. Inhibits the transcriptional activator activity of RORA. Can repress the expression of IL2 and IFNG via its association with transcription factor IKZF4. This is Forkhead box protein P3 (FOXP3) from Homo sapiens (Human).